Consider the following 129-residue polypeptide: Small ribosomal subunit protein uS11 (129 aa).

It belongs to the universal ribosomal protein uS11 family. As to quaternary structure, part of the 30S ribosomal subunit. Interacts with proteins S7 and S18. Binds to IF-3.

Located on the platform of the 30S subunit, it bridges several disparate RNA helices of the 16S rRNA. Forms part of the Shine-Dalgarno cleft in the 70S ribosome. This Novosphingobium aromaticivorans (strain ATCC 700278 / DSM 12444 / CCUG 56034 / CIP 105152 / NBRC 16084 / F199) protein is Small ribosomal subunit protein uS11.